Here is a 96-residue protein sequence, read N- to C-terminus: ATP synthase subunit c (96 aa).

2 consecutive transmembrane segments (helical) span residues 24 to 44 (HVGAYIGAGMAMTAAAGVGVG) and 75 to 95 (AIAESSAIYGLIIAFILIFVA).

Belongs to the ATPase C chain family. As to quaternary structure, F-type ATPases have 2 components, F(1) - the catalytic core - and F(0) - the membrane proton channel. F(1) has five subunits: alpha(3), beta(3), gamma(1), delta(1), epsilon(1). F(0) has three main subunits: a(1), b(2) and c(10-14). The alpha and beta chains form an alternating ring which encloses part of the gamma chain. F(1) is attached to F(0) by a central stalk formed by the gamma and epsilon chains, while a peripheral stalk is formed by the delta and b chains.

It is found in the cell membrane. F(1)F(0) ATP synthase produces ATP from ADP in the presence of a proton or sodium gradient. F-type ATPases consist of two structural domains, F(1) containing the extramembraneous catalytic core and F(0) containing the membrane proton channel, linked together by a central stalk and a peripheral stalk. During catalysis, ATP synthesis in the catalytic domain of F(1) is coupled via a rotary mechanism of the central stalk subunits to proton translocation. In terms of biological role, key component of the F(0) channel; it plays a direct role in translocation across the membrane. A homomeric c-ring of between 10-14 subunits forms the central stalk rotor element with the F(1) delta and epsilon subunits. The chain is ATP synthase subunit c from Mycoplasmoides gallisepticum (strain R(low / passage 15 / clone 2)) (Mycoplasma gallisepticum).